A 119-amino-acid polypeptide reads, in one-letter code: Large ribosomal subunit protein bL20 (119 aa).

It belongs to the bacterial ribosomal protein bL20 family.

Its function is as follows. Binds directly to 23S ribosomal RNA and is necessary for the in vitro assembly process of the 50S ribosomal subunit. It is not involved in the protein synthesizing functions of that subunit. The sequence is that of Large ribosomal subunit protein bL20 from Syntrophus aciditrophicus (strain SB).